The sequence spans 113 residues: UPF0122 protein M6_Spy0905 (113 aa).

The protein belongs to the UPF0122 family.

In terms of biological role, might take part in the signal recognition particle (SRP) pathway. This is inferred from the conservation of its genetic proximity to ftsY/ffh. May be a regulatory protein. The protein is UPF0122 protein M6_Spy0905 of Streptococcus pyogenes serotype M6 (strain ATCC BAA-946 / MGAS10394).